Consider the following 344-residue polypeptide: GTP 3',8-cyclase (344 aa).

The Radical SAM core domain occupies Pro-19–Ala-245. Arg-28 serves as a coordination point for GTP. 2 residues coordinate [4Fe-4S] cluster: Cys-35 and Cys-39. Tyr-41 serves as a coordination point for S-adenosyl-L-methionine. Residue Cys-42 coordinates [4Fe-4S] cluster. Arg-77 serves as a coordination point for GTP. Residue Gly-81 coordinates S-adenosyl-L-methionine. Residue Thr-111 participates in GTP binding. Ser-135 is an S-adenosyl-L-methionine binding site. A GTP-binding site is contributed by Lys-171. Position 205 (Met-205) interacts with S-adenosyl-L-methionine. 2 residues coordinate [4Fe-4S] cluster: Cys-268 and Cys-271. Arg-273–Arg-275 contacts GTP. Cys-285 serves as a coordination point for [4Fe-4S] cluster.

This sequence belongs to the radical SAM superfamily. MoaA family. Monomer and homodimer. The cofactor is [4Fe-4S] cluster.

It carries out the reaction GTP + AH2 + S-adenosyl-L-methionine = (8S)-3',8-cyclo-7,8-dihydroguanosine 5'-triphosphate + 5'-deoxyadenosine + L-methionine + A + H(+). The protein operates within cofactor biosynthesis; molybdopterin biosynthesis. In terms of biological role, catalyzes the cyclization of GTP to (8S)-3',8-cyclo-7,8-dihydroguanosine 5'-triphosphate. The protein is GTP 3',8-cyclase of Brucella canis (strain ATCC 23365 / NCTC 10854 / RM-666).